Reading from the N-terminus, the 555-residue chain is Xylulose kinase (555 aa).

4 residues coordinate substrate: H88, R158, D274, and N275. ATP is bound by residues W357, 455–456 (GA), and N459.

The protein belongs to the FGGY kinase family.

The protein resides in the cytoplasm. It catalyses the reaction D-xylulose + ATP = D-xylulose 5-phosphate + ADP + H(+). The chain is Xylulose kinase from Schizosaccharomyces pombe (strain 972 / ATCC 24843) (Fission yeast).